The chain runs to 543 residues: MTRFVFITGGVVSSLGKGIASAALAALLQARGYRVRLRKLDPYLNVDPGTMSPYQHGEVFVTDDGAETDLDLGHYERFTGVHATRADNATTGQIYSDVIARERRGDYLGATVQVIPHITDAIKEAVVAGTEDLDFVLVEIGGTVGDIESLPFLEAIRQLRNDLGAGQTMFVHLTLLPWIPSAGELKTKPTQHSVKELQNVGIQAQMLLCRSDRPIPDTERRKIANFCNVRPEAVIAALDVDTIYACPVSYHAEGMDTEVLRHFGLPHDQEPDLSAWNRVLDAMRHPEGEVRIAVVGKYTALLDAYKSLIEALQHGGIANRVRVKLDWVEAEIFEKSETAIEALRDAHAILVPGGFGERGSEGKIQAVRFAREHNIPFLGICFGMQMAVIECARNLAGLPDASSTEFGPTEEPLVGLMTEWARGNELLRRREGGEMGGTMRLGAYAAKLAEGSRVAEIYGKTEIRERHRHRYEVNVHYREVLEKAGLQFSGMSPDDILPEVVEYPNHPWFVAVQYHPELLSKPFDPHPLFSGFVGAAVKKMRLV.

The tract at residues 1-265 (MTRFVFITGG…DTEVLRHFGL (265 aa)) is amidoligase domain. CTP is bound at residue Ser13. Ser13 is a binding site for UTP. Residue 14 to 19 (SLGKGI) coordinates ATP. Tyr54 contacts L-glutamine. Residue Asp71 coordinates ATP. Residues Asp71 and Glu139 each contribute to the Mg(2+) site. CTP-binding positions include 146-148 (DIE), 186-191 (KTKPTQ), and Lys222. UTP contacts are provided by residues 186-191 (KTKPTQ) and Lys222. In terms of domain architecture, Glutamine amidotransferase type-1 spans 291–542 (RIAVVGKYTA…VGAAVKKMRL (252 aa)). Gly354 serves as a coordination point for L-glutamine. The active-site Nucleophile; for glutamine hydrolysis is the Cys381. L-glutamine contacts are provided by residues 382–385 (FGMQ), Glu405, and Arg470. Active-site residues include His515 and Glu517.

Belongs to the CTP synthase family. As to quaternary structure, homotetramer.

It catalyses the reaction UTP + L-glutamine + ATP + H2O = CTP + L-glutamate + ADP + phosphate + 2 H(+). It carries out the reaction L-glutamine + H2O = L-glutamate + NH4(+). The enzyme catalyses UTP + NH4(+) + ATP = CTP + ADP + phosphate + 2 H(+). It functions in the pathway pyrimidine metabolism; CTP biosynthesis via de novo pathway; CTP from UDP: step 2/2. Its activity is regulated as follows. Allosterically activated by GTP, when glutamine is the substrate; GTP has no effect on the reaction when ammonia is the substrate. The allosteric effector GTP functions by stabilizing the protein conformation that binds the tetrahedral intermediate(s) formed during glutamine hydrolysis. Inhibited by the product CTP, via allosteric rather than competitive inhibition. Catalyzes the ATP-dependent amination of UTP to CTP with either L-glutamine or ammonia as the source of nitrogen. Regulates intracellular CTP levels through interactions with the four ribonucleotide triphosphates. This Gluconacetobacter diazotrophicus (strain ATCC 49037 / DSM 5601 / CCUG 37298 / CIP 103539 / LMG 7603 / PAl5) protein is CTP synthase.